The primary structure comprises 98 residues: Small ribosomal subunit protein bS20 (98 aa).

This sequence belongs to the bacterial ribosomal protein bS20 family.

Functionally, binds directly to 16S ribosomal RNA. The polypeptide is Small ribosomal subunit protein bS20 (Prochlorococcus marinus (strain NATL1A)).